The sequence spans 630 residues: 1-deoxy-D-xylulose-5-phosphate synthase (630 aa).

Residues His-72 and 113-115 (GHS) each bind thiamine diphosphate. Asp-144 is a Mg(2+) binding site. Thiamine diphosphate contacts are provided by residues 145–146 (GA), Asn-173, Tyr-284, and Glu-367. Asn-173 contacts Mg(2+).

The protein belongs to the transketolase family. DXPS subfamily. Homodimer. Requires Mg(2+) as cofactor. Thiamine diphosphate serves as cofactor.

The enzyme catalyses D-glyceraldehyde 3-phosphate + pyruvate + H(+) = 1-deoxy-D-xylulose 5-phosphate + CO2. The protein operates within metabolic intermediate biosynthesis; 1-deoxy-D-xylulose 5-phosphate biosynthesis; 1-deoxy-D-xylulose 5-phosphate from D-glyceraldehyde 3-phosphate and pyruvate: step 1/1. In terms of biological role, catalyzes the acyloin condensation reaction between C atoms 2 and 3 of pyruvate and glyceraldehyde 3-phosphate to yield 1-deoxy-D-xylulose-5-phosphate (DXP). This Bacillus cereus (strain AH187) protein is 1-deoxy-D-xylulose-5-phosphate synthase.